The primary structure comprises 465 residues: Cysteine--tRNA ligase (465 aa).

Cys-27 serves as a coordination point for Zn(2+). The 'HIGH' region signature appears at 29–39 (PTVYDDAHLGH). The disordered stretch occupies residues 153–173 (DISHKVSDDDTQSRVEHNSEK). Zn(2+) is bound by residues Cys-208, His-237, and Glu-241. The short motif at 269–273 (KMSKS) is the 'KMSKS' region element. Position 272 (Lys-272) interacts with ATP.

It belongs to the class-I aminoacyl-tRNA synthetase family. Monomer. It depends on Zn(2+) as a cofactor.

The protein resides in the cytoplasm. The catalysed reaction is tRNA(Cys) + L-cysteine + ATP = L-cysteinyl-tRNA(Cys) + AMP + diphosphate. This Sulfurovum sp. (strain NBC37-1) protein is Cysteine--tRNA ligase.